The sequence spans 182 residues: NADH-quinone oxidoreductase subunit B 2 (182 aa).

4 residues coordinate [4Fe-4S] cluster: Cys57, Cys58, Cys123, and Cys153.

It belongs to the complex I 20 kDa subunit family. NDH-1 is composed of 14 different subunits. Subunits NuoB, C, D, E, F, and G constitute the peripheral sector of the complex. [4Fe-4S] cluster is required as a cofactor.

It is found in the cell membrane. The catalysed reaction is a quinone + NADH + 5 H(+)(in) = a quinol + NAD(+) + 4 H(+)(out). Functionally, NDH-1 shuttles electrons from NADH, via FMN and iron-sulfur (Fe-S) centers, to quinones in the respiratory chain. The immediate electron acceptor for the enzyme in this species is believed to be a menaquinone. Couples the redox reaction to proton translocation (for every two electrons transferred, four hydrogen ions are translocated across the cytoplasmic membrane), and thus conserves the redox energy in a proton gradient. The chain is NADH-quinone oxidoreductase subunit B 2 from Symbiobacterium thermophilum (strain DSM 24528 / JCM 14929 / IAM 14863 / T).